The sequence spans 220 residues: UPF0502 protein PSPPH_2577 (220 aa).

The protein belongs to the UPF0502 family.

The sequence is that of UPF0502 protein PSPPH_2577 from Pseudomonas savastanoi pv. phaseolicola (strain 1448A / Race 6) (Pseudomonas syringae pv. phaseolicola (strain 1448A / Race 6)).